Here is a 267-residue protein sequence, read N- to C-terminus: Extensin (267 aa).

Residues 1-267 (MCPAFSIFFN…HTPSPPPPYY (267 aa)) are disordered. 13 repeats span residues 18-33 (PPTY…PKPT), 34-54 (PPTY…PKPT), 55-70 (PPTY…PKPT), 71-91 (PPTY…PKPT), 92-107 (PPTY…PKPT), 108-128 (PPTY…PKPT), 129-144 (PPTY…PKPT), 145-160 (PPTY…PKPT), 161-179 (PPTY…PKPT), 180-195 (PPTY…PKPT), 196-211 (PPTY…PKPT), 212-232 (PPTY…PKPT), and 233-253 (PPTY…YTPT). The tract at residues 18-253 (PPTYTPSPKP…ATKPPTYTPT (236 aa)) is highly repetitive. The segment covering 20 to 267 (TYTPSPKPPT…HTPSPPPPYY (248 aa)) has biased composition (pro residues). The segment at 261-265 (SPPPP) is extensin repetitive element.

Post-translationally, hydroxylated on proline residues in the S-P-P-P-P repeat. In terms of processing, O-glycosylated on hydroxyprolines. As to expression, mainly in the coleoptile node and root tip.

The protein resides in the secreted. It is found in the primary cell wall. Its function is as follows. Structural component in primary cell wall. This is Extensin (HRGP) from Zea mays (Maize).